Here is a 205-residue protein sequence, read N- to C-terminus: Protein N-terminal glutamine amidohydrolase (205 aa).

Catalysis depends on residues Cys20, His74, and Asp90.

Belongs to the NTAQ1 family. In terms of assembly, monomer.

The enzyme catalyses N-terminal L-glutaminyl-[protein] + H2O = N-terminal L-glutamyl-[protein] + NH4(+). Its function is as follows. Mediates the side-chain deamidation of N-terminal glutamine residues to glutamate, an important step in N-end rule pathway of protein degradation. Conversion of the resulting N-terminal glutamine to glutamate renders the protein susceptible to arginylation, polyubiquitination and degradation as specified by the N-end rule. Does not act on substrates with internal or C-terminal glutamine and does not act on non-glutamine residues in any position. This Drosophila pseudoobscura pseudoobscura (Fruit fly) protein is Protein N-terminal glutamine amidohydrolase (tun).